Reading from the N-terminus, the 122-residue chain is Large ribosomal subunit protein uL14 (122 aa).

The protein belongs to the universal ribosomal protein uL14 family. As to quaternary structure, part of the 50S ribosomal subunit. Forms a cluster with proteins L3 and L19. In the 70S ribosome, L14 and L19 interact and together make contacts with the 16S rRNA in bridges B5 and B8.

Functionally, binds to 23S rRNA. Forms part of two intersubunit bridges in the 70S ribosome. This is Large ribosomal subunit protein uL14 from Rickettsia massiliae (strain Mtu5).